The sequence spans 467 residues: DNA repair protein RadA (467 aa).

The C4-type zinc finger occupies 10-27; the sequence is CQNCGAVHSRWAGKCDSC. Residue 98–105 coordinates ATP; that stretch reads GDPGIGKS. Positions 260–264 match the RadA KNRFG motif motif; that stretch reads KNRFG. Residues 359–467 form a lon-protease-like region; sequence DVYLNVAGGY…RIAASGAGKK (109 aa).

It belongs to the RecA family. RadA subfamily.

DNA-dependent ATPase involved in processing of recombination intermediates, plays a role in repairing DNA breaks. Stimulates the branch migration of RecA-mediated strand transfer reactions, allowing the 3' invading strand to extend heteroduplex DNA faster. Binds ssDNA in the presence of ADP but not other nucleotides, has ATPase activity that is stimulated by ssDNA and various branched DNA structures, but inhibited by SSB. Does not have RecA's homology-searching function. In Brucella abortus (strain 2308), this protein is DNA repair protein RadA.